A 551-amino-acid chain; its full sequence is Pentatricopeptide repeat-containing protein At3g13150 (551 aa).

The tract at residues Ala-22–Leu-67 is disordered. The span at Pro-29 to Ser-48 shows a compositional bias: polar residues. A compositionally biased stretch (basic and acidic residues) spans Asp-58–Leu-67. 7 PPR repeats span residues Ser-121–Arg-155, Thr-156–Pro-191, Asp-192–Pro-226, Asp-227–Pro-261, Asn-262–Pro-296, Asp-297–Pro-331, and Asp-332–Ser-366. Disordered stretches follow at residues Gly-409–Thr-435 and Ser-449–Asp-551. Residues Ser-415 to Thr-435 are compositionally biased toward low complexity.

Belongs to the PPR family. P subfamily.

The chain is Pentatricopeptide repeat-containing protein At3g13150 from Arabidopsis thaliana (Mouse-ear cress).